The primary structure comprises 157 residues: Transcription elongation factor GreA (157 aa).

The stretch at 9–30 (LEGAQQLKEELKRRKTTDRKRI) forms a coiled coil.

It belongs to the GreA/GreB family.

Functionally, necessary for efficient RNA polymerase transcription elongation past template-encoded arresting sites. The arresting sites in DNA have the property of trapping a certain fraction of elongating RNA polymerases that pass through, resulting in locked ternary complexes. Cleavage of the nascent transcript by cleavage factors such as GreA or GreB allows the resumption of elongation from the new 3'terminus. GreA releases sequences of 2 to 3 nucleotides. The sequence is that of Transcription elongation factor GreA from Magnetococcus marinus (strain ATCC BAA-1437 / JCM 17883 / MC-1).